The chain runs to 474 residues: uncharacterized protein (474 aa).

Residues 1–23 (MLRRYLTLSFSSLLLLALLFLTG) form the signal peptide. Cys24 carries N-palmitoyl cysteine lipidation. Cys24 carries the S-diacylglycerol cysteine lipid modification.

Belongs to the MG067/MG068/MG395 family.

It is found in the cell membrane. This is an uncharacterized protein from Mycoplasma genitalium (strain ATCC 33530 / DSM 19775 / NCTC 10195 / G37) (Mycoplasmoides genitalium).